A 282-amino-acid chain; its full sequence is 4-hydroxybenzoate octaprenyltransferase (282 aa).

Helical transmembrane passes span 17–37, 40–60, 90–110, 113–133, 135–155, 163–183, 207–227, 231–251, and 262–282; these read IGILLLWYPTAWALWMANQGF, IDLLMIFLFGTVFMRSAGCVI, AFILLFILLCASLLLLLKLPI, FYFAVISVLITFLYPFCKRFL, APQLILGLAFSMGIPMAFIAS, FIVLFLINFSWIIAYDTMYAM, LIIALLLIFLHSLWLVWAINK, WFFYLLWCTAAGILTYQLKLI, and AFLVSGYYGLVMWFAVGLALI.

Belongs to the UbiA prenyltransferase family. The cofactor is Mg(2+).

The protein resides in the cell inner membrane. It catalyses the reaction all-trans-octaprenyl diphosphate + 4-hydroxybenzoate = 4-hydroxy-3-(all-trans-octaprenyl)benzoate + diphosphate. It functions in the pathway cofactor biosynthesis; ubiquinone biosynthesis. In terms of biological role, catalyzes the prenylation of para-hydroxybenzoate (PHB) with an all-trans polyprenyl group. Mediates the second step in the final reaction sequence of ubiquinone-8 (UQ-8) biosynthesis, which is the condensation of the polyisoprenoid side chain with PHB, generating the first membrane-bound Q intermediate 3-octaprenyl-4-hydroxybenzoate. This Legionella pneumophila (strain Corby) protein is 4-hydroxybenzoate octaprenyltransferase.